The following is a 434-amino-acid chain: Na(+)/H(+) antiporter NhaA 1 (434 aa).

Helical transmembrane passes span 30-50, 70-90, 108-128, 141-161, 172-192, 195-215, 286-306, 318-338, 354-374, and 386-406; these read TGGLLLLVFTVIALVWANVAG, LSIEHWAADGLLAIFFFVTGL, ALPIAAAVGGMAVPALLFVLV, VGWATPTATDIAFALGILAVV, FLLTLAVVDDLLGITVIAIFY, QVHWTPLLLALLTLAAFTVAV, FAVPVFALFSAGVAIGGVSGF, VIAGLVLGKPIGIVGTTWLLA, VLGMAMLAGMGFTVSLLIGSL, and VTLGVLVGSLLSAVLAAVVLS.

Belongs to the NhaA Na(+)/H(+) (TC 2.A.33) antiporter family.

Its subcellular location is the cell membrane. The catalysed reaction is Na(+)(in) + 2 H(+)(out) = Na(+)(out) + 2 H(+)(in). Na(+)/H(+) antiporter that extrudes sodium in exchange for external protons. The chain is Na(+)/H(+) antiporter NhaA 1 from Kineococcus radiotolerans (strain ATCC BAA-149 / DSM 14245 / SRS30216).